Here is a 391-residue protein sequence, read N- to C-terminus: Phosphoprotein (391 aa).

3 positions are modified to phosphothreonine: threonine 10, threonine 16, and threonine 39. The residue at position 69 (serine 69) is a Phosphoserine. Disordered stretches follow at residues 82 to 101 (SSSE…FAQT) and 143 to 208 (PRTS…PANV). Residues threonine 91, threonine 150, and threonine 165 each carry the phosphothreonine modification. At serine 188 the chain carries Phosphoserine. The segment covering 198-208 (LPQQDSTPANV) has biased composition (polar residues). Residues 218-245 (ANEIMDLLRGMDARLQHLEQKVDKVLAQ) adopt a coiled-coil conformation. Phosphothreonine is present on threonine 250. Serine 257 carries the post-translational modification Phosphoserine. Phosphothreonine occurs at positions 258 and 282. Residues serine 292 and serine 294 each carry the phosphoserine modification. Phosphothreonine is present on threonine 298. A phosphoserine mark is found at serine 301 and serine 374. The tract at residues 343 to 391 (AGRKVMITKMITDCVANPQMKQAFEQRLAKASTEDALNDIKRDIIRSAI) is interaction with the nucleoprotein. The segment at 348–391 (MITKMITDCVANPQMKQAFEQRLAKASTEDALNDIKRDIIRSAI) is x domain (XD). Threonine 375 is modified (phosphothreonine).

The protein belongs to the rubulavirus/avulavirus P protein family. In terms of assembly, homotetramer. Interacts (via multimerization domain) with polymerase L; this interaction forms the polymerase L-P complex. Interacts (via N-terminus) with N0 (via Ncore); this interaction allows P to chaperon N0 to avoid N polymerization before encapsidation. Interacts (via C-terminus) with N-RNA template; this interaction positions the polymerase on the template for both transcription and replication. Interacts with host RPS6KB1 kinase; this interaction may play a role in the viral replication and transcription.

It is found in the virion. In terms of biological role, essential cofactor of the RNA polymerase L that plays a central role in the transcription and replication by forming the polymerase complex with RNA polymerase L and recruiting L to the genomic N-RNA template for RNA synthesis. Also plays a central role in the encapsidation of nascent RNA chains by forming the encapsidation complex with the nucleocapsid protein N (N-P complex). Acts as a chaperone for newly synthesized free N protein, so-called N0, allowing encapsidation of nascent RNA chains during replication. The nucleoprotein protein N prevents excessive phosphorylation of P, which leads to down-regulation of viral transcription/ replication. Participates, together with N, in the formation of viral factories (viroplasms), which are large inclusions in the host cytoplasm where replication takes place. In Mumps orthorubulavirus (MuV), this protein is Phosphoprotein (V/P).